A 151-amino-acid polypeptide reads, in one-letter code: Troponin C, isoallergen Bla g 6.0101 (151 aa).

EF-hand domains lie at 7–42 (EQIQ…LGHR), 43–78 (LDDD…FLVE), 83–118 (AMQQ…LDDK), and 119–151 (ITAE…MTGE). Positions 56, 58, 60, 62, and 67 each coordinate Ca(2+). Aspartate 132, aspartate 134, serine 136, threonine 138, and glutamate 143 together coordinate Ca(2+).

It belongs to the troponin C family.

Functionally, troponin is the central regulatory protein of striated muscle contraction. It consists of three components: Troponin-I (Tn-I) which is the inhibitor of actomyosin ATPase, Troponin-T (Tn-T) which contains the binding site for tropomyosin and Troponin-C (Tn-C). The binding of calcium to Tn-C abolishes the inhibitory action of Tn on actin filaments. This Blattella germanica (German cockroach) protein is Troponin C, isoallergen Bla g 6.0101.